The sequence spans 189 residues: Protein jagunal homolog (189 aa).

At 1-34 (MSSRGVRAAGTDGNDFQNRQRIAQHYQESAQYKS) the chain is on the cytoplasmic side. A helical membrane pass occupies residues 35-55 (VLKWFFVPHFLILVFMWLKVG). Residues 56–75 (SEFLRYNFGWKNAFFERLDM) are Lumenal-facing. The helical transmembrane segment at 76 to 96 (PAAYPWEYVWCLSFIPIVLAL) threads the bilayer. Residues 97-105 (SSFQRNKLK) are Cytoplasmic-facing. The chain crosses the membrane as a helical span at residues 106 to 126 (VLHYAYYAEFICGIFPCMIGL). Topologically, residues 127 to 150 (GGQLPELLEYANDMEGSNTPTFKG) are lumenal. The chain crosses the membrane as a helical span at residues 151-171 (IFPMVIIWYIFFAVALQIHGF). Residues 172 to 189 (SMYFMHHLAAAWAPVKRD) lie on the Cytoplasmic side of the membrane.

The protein belongs to the jagunal family.

The protein resides in the endoplasmic reticulum membrane. This chain is Protein jagunal homolog, found in Caenorhabditis briggsae.